Here is a 2924-residue protein sequence, read N- to C-terminus: MGNAPSNSSEDEAAAAGGEGWSPHQDWAADSGTTPGPGPAAAVLPSAAALLEPARLREAAAALRPAPPCESLVSRHHGALLRWLEERLGRGEESVTLEQFRELLEARGAGCSGEQFEEAFAQFDAEGDGTVDAENMLEALKNSSGANLQGELSHVIRQLQACSLVPGFIDIFSESKEGLGIHSSMILRFLHRNRISSMVIPYPMLDHCNNMCTMRSSVLKESLDQLVQKEKESPGDLARSPEMDKLKSVTKCYAYIETSSNPADIYRMTNGETSSYWQSDGSARSHWIRLKMKPDVVLRHLSIAVAATDQSYMPQQVTVAVGRSASDLQEVRDVHIPSNVTGYVTLLENANISQLYVQINIKRCLSDGCDTRIHGLRAVGFQRVKKSGVSVSDASAIWYWSLLTSLVTASMETNPAFVQTVLHNTQKALQHMPPLSLSPGSTDFSTFLSPNVLEEVDSFLIRITSCCSTPEVELTLLAFALARGSIAKVMSSLCTITDHLDTQYDASSLISSMASVRQNLLLKYGKPLQLTLQACDVKGKEDKSGPENLLVEPWTRDGFLTETGKTRASTIFSTGSDSAFQVTQIRIMVRRGGIGAQCGLVFAYNSPSNKFHAEEHFKRFEKYDKWKLQELRQFVKSRIGCSSDDLGEDDPIGWFELEEEWDEADVKLQQCRVAKFLMVKFLCTRQESAERLGVQGLSISGYLRPARAEAEQSILYAHCRRDTENIHGATLLLRTLQFIQQLSHDLMQQKESGLKHKSFLDFAGLDLQIFWKFYSKLKQNRREECICAQTLLLKLLQSCFSVLQGDPQAASEEEKPTAQRSEGIQAAKELYTHLCNVVDKPNGNSMPMEILKQEVRNTLLNGAAIFFPDRQTRRSQLFTMMKSVTEHERKQSLQLTFHSLCTYFSDKDPGGLLLLPEKSDLATMNTSEVLAVMNTLLSVAARECELLMLNRSHGAVGSVLFSLFWSVQGSLLSWCFLQLKSTDAAAKELAMDLIEKYVGQFLASMRVILESLLSQYSGKTIVEKLCNSVFSMAARQLVIFLLDFCTLDVSHCTLLREFSTLTELLKKLCSDPEGGLSKLDVETWQQEQPVVLHTWTKESTHNYENNCHEVSVFISPGATYFEVEFDERCETEKRYDYLEFTDSRGGKTRYDTKVGTYKWPKKVTFKDGPRLQFLFHSDSSNNEWGYKFTVTAYGLPDVAVSWGLDLQLLVSRLMGRLASQCMALKSVHQLGSNMAVSQAKLTSVLNSPLWKPVFRHQICPELELEASWPTHPHKDGKEVKNIPDDPCRHFLLDFAQSEPAQNFCGPYSELFKGFIQACRKQAPKTDIVAGSTIDQAVNATFAALVYRTPDLYEKLQKYVNSGGKIALTEEFSQVYSLADGIRIWMLEMKQKSLLSLGNDSEEKRGLEAAEVNPESLAKECIQKSLLLLKFLPMSKSSKENCDKLETVDETDHLQPLDRRQRTSSVVEEHFQGSASPTEAATPAAGDRSPALEIQPKLLPSSGPCVAEVSTAEEPSPPSTPTRRPPFTRGRLRLLSFRSMEETRPVPTVKEKYPVLKDVMDFIKDQSLSHESVVKVLSLRKAQGQSILEVLRIIQYCTESLGQPHCFHPPYILFLLELLTCQKDFTNYFGHLEGCGADLHREIRDTYYQLVLFLVKAIKRFSSINDRSLLPALSCVQTALLHLLDMGWEPSDLAFFVDIQLPDLLMNMSQENISVHDSVISQWSEEDELADAKQNSEWMDECQDGMFEAWYEKIAQEDPEKQRKMHMFIARYCDLLNVDISCDGCDEIAPWHRYRCLQCSDMDLCKTCFLGGVKPEGHGDDHEMVNMEFTCDHCQGLIIGRRMNCNVCDDFDLCYGCYTAKKYSYGHLPTHSITAHPMVTIRISDRQRLIQPYIHNYSWLLFAALALYSAHLTSTEQVDGEQLDPQARTNAATLRSQCMQLVGDCLMKAHQGKGLKALALLGVLPDGDSTSENQALPVTVSFQASEEQADAGLLVPCNGKRAADTEVRPLDYKQKKKAGEDLSIVKDPSCQTQVSDAPASAHVPPGLPDAEHPEVSAQVLVEEKAITPNPEQVFAECSQKRILGLLAAMLPPIKSGPTVPLIDLEHVLPLMFQVVISNAGHLNETYHLTLGLLGQLIIRLQPAEVDAAVMKVLSAKHNLRVGLDWACSMAEILRSLNNAPLWRDVIATFTDHCIKQLPFQLKHTNIFTLLVLVGFPQVLCVGTRCVYMDNANEPHNVIILKHFTEKNRAVIVDVKTRKRKTVKDYQLVQKGGGQECGTSQSQLSQYSQHFAFIASHLLQTSMDSHCPEAVEATWVLSLALKGLYKTLKAHGFEETHATFLQTDLLKLLVKKCSKGTGFSKTWLLRDLEILSIMLYSSKKEINTLAEHGDLELDERGDQEEELDRPVSSPGEAEQKKLDPLENLDEPTRICFLMAHDALNAPLHILRAIYELQMKKTDSFFLEVQKRFDGDELTTDERIRSLAQRWQPSRSLRLEEQSAKAVDTDMIILPCLSRPARSDQATPESNPVTQKLISSTESELQQSYAKQRRSKSAALLHKELNCKSKRAIRDYLFRVNEATSVLYARHVLASLLAEWPGHVPVSEDILELSGPAHMTYILDMFMQLEEKHQWEKILQKVLQGCRENMLGTMALAACQFMEEPGMEVQVRESKHSYNNNTSFEDKVHIPGAIYLSIKFDPQRNTEEGCDELAMSSSSDFQQDRHNFSGSQQKWKDFELPGDTLYYRFTSDMSNTEWGYRFTVTAGHLGRFQTGFEILKQMLSEERVVPHLALGKIWEWLVGVACRQTGHQRLKAIHLLLRIVQCCSHSDLCDLGLLKPLWQLFTHMEYGLFEDVTQPGILLPLHRALTELFFVTENRAQELGLLQEYLLALTTEDHLLRCAAQALQNIAAISLAINYPNKATRLWNVEC.

The interval methionine 1–alanine 41 is disordered. Glycine 2 carries N-myristoyl glycine lipidation. The segment covering alanine 28–alanine 41 has biased composition (low complexity). Residues cysteine 111–alanine 146 form the EF-hand domain. Residues leucine 226–serine 405 form the DOC domain. Position 240 is a phosphoserine (serine 240). A compositionally biased stretch (basic and acidic residues) spans histidine 1452–phenylalanine 1470. Positions histidine 1452–threonine 1527 are disordered. Residues glycine 1472–glycine 1485 show a composition bias toward low complexity. Phosphoserine is present on residues serine 1475, serine 1488, and serine 1509. Threonine 1510 carries the phosphothreonine modification. Over residues proline 1514–arginine 1523 the composition is skewed to pro residues. Serine 1515 bears the Phosphoserine mark. Phosphothreonine occurs at positions 1519 and 1521. Phosphoserine occurs at positions 1535 and 1538. 2 ZZ-type zinc fingers span residues asparagine 1776 to aspartate 1831 and asparagine 1825 to isoleucine 1880. 16 residues coordinate Zn(2+): cysteine 1781, cysteine 1784, cysteine 1795, cysteine 1798, cysteine 1804, cysteine 1807, histidine 1817, histidine 1821, cysteine 1830, cysteine 1833, cysteine 1844, cysteine 1847, cysteine 1853, cysteine 1856, histidine 1866, and histidine 1870. Residues aspartate 2388 to proline 2418 are disordered. Serine 2407 is subject to Phosphoserine. At lysine 2630 the chain carries N6-acetyllysine.

In terms of assembly, interacts with KLF6 and KLF9. Interacts via (ZZ-type 2 zinc finger) with histone H3 trimethylated at 'Lys-4' (H3K4me3) and histone H3 acetylated at 'Lys-4' (H3K4ac).

Histone H3 reader which may act as a transcriptional coactivator for KLF6 and KLF9 transcription factors. This chain is Zinc finger ZZ-type and EF-hand domain-containing protein 1 (Zzef1), found in Mus musculus (Mouse).